Reading from the N-terminus, the 633-residue chain is MA3 DOMAIN-CONTAINING TRANSLATION REGULATORY FACTOR 4 (633 aa).

4 MI domains span residues 56-177, 220-341, 351-472, and 514-633; these read DYKR…RAKK, ETKR…ERSD, RFKK…EISN, and DAKD…STDS. The Nuclear localization signal 1 motif lies at 94-101; it reads VKRLVSMA. Positions 389–396 match the Nuclear localization signal 2 motif; the sequence is LKKLITLA.

The protein belongs to the PDCD4 family. Binds to EIF4A1. The association with ribosomes is modulated by cellular energy status and TOR activity. In terms of tissue distribution, mostly expressed, at low levels, in rosette leaves and flower buds, and, to a lower extent, in roots, stems, cauline leaves and flowers.

It localises to the nucleus. Its subcellular location is the cytoplasm. It is found in the cytosol. Involved in target of rapamycin (TOR)-regulated translation control, especially under energy-deficient conditions. The protein is MA3 DOMAIN-CONTAINING TRANSLATION REGULATORY FACTOR 4 of Arabidopsis thaliana (Mouse-ear cress).